The primary structure comprises 216 residues: LexA repressor 1 (216 aa).

The segment at residues 38 to 58 is a DNA-binding region (H-T-H motif); it reads TRQIGAAVGLRSMSSVARHLR. Active-site for autocatalytic cleavage activity residues include Ser-140 and Lys-177.

It belongs to the peptidase S24 family. In terms of assembly, homodimer.

It catalyses the reaction Hydrolysis of Ala-|-Gly bond in repressor LexA.. Its function is as follows. Represses a number of genes involved in the response to DNA damage (SOS response), including recA and lexA. In the presence of single-stranded DNA, RecA interacts with LexA causing an autocatalytic cleavage which disrupts the DNA-binding part of LexA, leading to derepression of the SOS regulon and eventually DNA repair. The protein is LexA repressor 1 of Nocardia farcinica (strain IFM 10152).